Reading from the N-terminus, the 150-residue chain is Large ribosomal subunit protein uL11 (150 aa).

Belongs to the universal ribosomal protein uL11 family. As to quaternary structure, part of the ribosomal stalk of the 50S ribosomal subunit. Interacts with L10 and the large rRNA to form the base of the stalk. L10 forms an elongated spine to which L12 dimers bind in a sequential fashion forming a multimeric L10(L12)X complex. One or more lysine residues are methylated.

Functionally, forms part of the ribosomal stalk which helps the ribosome interact with GTP-bound translation factors. This Jannaschia sp. (strain CCS1) protein is Large ribosomal subunit protein uL11.